The primary structure comprises 110 residues: Parvalbumin alpha (110 aa).

Residue serine 2 is modified to N-acetylserine. Phosphoserine is present on residues serine 2, serine 8, and serine 24. 2 EF-hand domains span residues 39–74 (KNPD…FSSD) and 78–110 (LSAK…VAES). Ca(2+) contacts are provided by aspartate 52, aspartate 54, serine 56, phenylalanine 58, glutamate 60, glutamate 63, aspartate 91, aspartate 93, aspartate 95, lysine 97, and glutamate 102.

Expressed in the modiolar nerve root (at protein level).

Functionally, in muscle, parvalbumin is thought to be involved in relaxation after contraction. It binds two calcium ions. The protein is Parvalbumin alpha (Pvalb) of Mus musculus (Mouse).